Reading from the N-terminus, the 141-residue chain is Large ribosomal subunit protein uL11 (141 aa).

Belongs to the universal ribosomal protein uL11 family. Part of the ribosomal stalk of the 50S ribosomal subunit. Interacts with L10 and the large rRNA to form the base of the stalk. L10 forms an elongated spine to which L12 dimers bind in a sequential fashion forming a multimeric L10(L12)X complex. In terms of processing, one or more lysine residues are methylated.

Its function is as follows. Forms part of the ribosomal stalk which helps the ribosome interact with GTP-bound translation factors. In Dinoroseobacter shibae (strain DSM 16493 / NCIMB 14021 / DFL 12), this protein is Large ribosomal subunit protein uL11.